Here is a 516-residue protein sequence, read N- to C-terminus: Importin subunit alpha-B (516 aa).

Over residues 1–29 (MQRSKQETRKSQYKKSIDSDESRRKREEA) the composition is skewed to basic and acidic residues. The tract at residues 1-54 (MQRSKQETRKSQYKKSIDSDESRRKREEASLSIRKNKREESLLKKRTQAVPGST) is disordered. The region spanning 1-55 (MQRSKQETRKSQYKKSIDSDESRRKREEASLSIRKNKREESLLKKRTQAVPGSTP) is the IBB domain. ARM repeat units follow at residues 55–96 (PVKV…KLLS), 100–140 (SPPI…NIAS), 143–182 (PEQTRVVIENGAIQVFVLLLSSPHDDVREQAVWALGNIAG), 185–227 (HYCR…NFCR), 229–268 (KPQPPFEIVRASLPVLAKLIYYQDEEVLIDACWALSYLSD), 271–310 (NERIQEVIDAKVCRKMVELLGHPTIAVQTPALRTIGNIVT), 313–352 (DNQTQIVLSVQALSHLLNLLQSPKRAIRKEACWTISNITA), 355–394 (KNQIQQVIDANIIPSLVYLLANAEFEIQKEAAWAISNATS), and 398–437 (PQQIHFLVSQGCVKPLCDLLKVSDPRIINVALEGIENILV). The segment at 490–516 (EQEDEGDLMPEGSSFSFSNQTNSNFNL) is disordered. Over residues 502–516 (SSFSFSNQTNSNFNL) the composition is skewed to low complexity.

It belongs to the importin alpha family. In terms of assembly, forms a complex with tnpo/importin subunit beta.

The protein resides in the cytoplasm. It is found in the nucleus envelope. In terms of biological role, functions in nuclear protein import via a substrate-importin alpha-beta transport complex that passes though the nuclear pore complexes (NPC). Binds specifically and directly to substrates containing either a simple or bipartite NLS motif. The protein is Importin subunit alpha-B of Dictyostelium discoideum (Social amoeba).